The chain runs to 528 residues: Dihydromonacolin L monooxygenase LovA (528 aa).

Over 1-23 (MTVDALTQPHHLLSLAWNDTQQH) the chain is Cytoplasmic. Residues 24–44 (GSWFAPLVTTSAGLLCLLLYL) form a helical; Signal-anchor for type II membrane protein membrane-spanning segment. At 45–528 (CSSGRRSELP…DEDIRLPGSL (484 aa)) the chain is on the lumenal side. Asn-399 carries N-linked (GlcNAc...) asparagine glycosylation. Cys-465 is a binding site for heme.

The protein belongs to the cytochrome P450 family. Requires heme as cofactor.

The protein resides in the membrane. It localises to the endoplasmic reticulum membrane. The catalysed reaction is dihydromonacolin L carboxylate + reduced [NADPH--hemoprotein reductase] + O2 = monacolin L carboxylate + oxidized [NADPH--hemoprotein reductase] + 2 H2O + H(+). The enzyme catalyses monacolin L carboxylate + reduced [NADPH--hemoprotein reductase] + O2 = monacolin J carboxylate + oxidized [NADPH--hemoprotein reductase] + H2O + H(+). It functions in the pathway polyketide biosynthesis; lovastatin biosynthesis. Its function is as follows. Dihydromonacolin L monooxygenase; part of the gene cluster that mediates the biosynthesis of lovastatin (also known as mevinolin, mevacor or monacolin K), a hypolipidemic inhibitor of (3S)-hydroxymethylglutaryl-coenzyme A (HMG-CoA) reductase (HMGR). The first step in the biosynthesis of lovastatin is the production of dihydromonacolin L acid by the lovastatin nonaketide synthase lovB and the trans-acting enoyl reductase lovC via condensation of one acetyl-CoA unit and 8 malonyl-CoA units. Dihydromonacolin L acid is released from lovB by the thioesterase lovG. Next, dihydromonacolin L acid is oxidized by the dihydromonacolin L monooxygenase lovA twice to form monacolin J acid. The 2-methylbutyrate moiety of lovastatin is synthesized by the lovastatin diketide synthase lovF via condensation of one acetyl-CoA unit and one malonyl-CoA unit. Finally, the covalent attachment of this moiety to monacolin J acid is catalyzed by the transesterase lovD to yield lovastatin. LovD has broad substrate specificity and can also convert monacolin J to simvastatin using alpha-dimethylbutanoyl-S-methyl-3-mercaptopropionate (DMB-S-MMP) as the thioester acyl donor, and can also catalyze the reverse reaction and function as hydrolase in vitro. LovD has much higher activity with LovF-bound 2-methylbutanoate than with free diketide substrates. The polypeptide is Dihydromonacolin L monooxygenase LovA (Aspergillus terreus (strain NIH 2624 / FGSC A1156)).